The sequence spans 268 residues: LOB domain-containing protein 22 (268 aa).

Residues M1–N31 are disordered. Low complexity predominate over residues S22–N31. Residues Q35 to L136 form the LOB domain.

Belongs to the LOB domain-containing protein family.

This is LOB domain-containing protein 22 (LBD22) from Arabidopsis thaliana (Mouse-ear cress).